Consider the following 166-residue polypeptide: NAD(P)H-quinone oxidoreductase subunit I, chloroplastic (166 aa).

4Fe-4S ferredoxin-type domains lie at 55-84 (GRIH…VDWK) and 95-124 (LNYS…MTEE). The [4Fe-4S] cluster site is built by cysteine 64, cysteine 67, cysteine 70, cysteine 74, cysteine 104, cysteine 107, cysteine 110, and cysteine 114.

It belongs to the complex I 23 kDa subunit family. NDH is composed of at least 16 different subunits, 5 of which are encoded in the nucleus. [4Fe-4S] cluster serves as cofactor.

The protein resides in the plastid. The protein localises to the chloroplast thylakoid membrane. It catalyses the reaction a plastoquinone + NADH + (n+1) H(+)(in) = a plastoquinol + NAD(+) + n H(+)(out). The catalysed reaction is a plastoquinone + NADPH + (n+1) H(+)(in) = a plastoquinol + NADP(+) + n H(+)(out). In terms of biological role, NDH shuttles electrons from NAD(P)H:plastoquinone, via FMN and iron-sulfur (Fe-S) centers, to quinones in the photosynthetic chain and possibly in a chloroplast respiratory chain. The immediate electron acceptor for the enzyme in this species is believed to be plastoquinone. Couples the redox reaction to proton translocation, and thus conserves the redox energy in a proton gradient. In Silphium perfoliatum (Cup plant), this protein is NAD(P)H-quinone oxidoreductase subunit I, chloroplastic.